Here is a 418-residue protein sequence, read N- to C-terminus: Glutamyl-tRNA reductase (418 aa).

Residues T57–R60, S113, D118–E120, and Q124 each bind substrate. The active-site Nucleophile is the C58. Position 193–198 (G193–G198) interacts with NADP(+).

This sequence belongs to the glutamyl-tRNA reductase family. Homodimer.

The catalysed reaction is (S)-4-amino-5-oxopentanoate + tRNA(Glu) + NADP(+) = L-glutamyl-tRNA(Glu) + NADPH + H(+). The protein operates within porphyrin-containing compound metabolism; protoporphyrin-IX biosynthesis; 5-aminolevulinate from L-glutamyl-tRNA(Glu): step 1/2. Its function is as follows. Catalyzes the NADPH-dependent reduction of glutamyl-tRNA(Glu) to glutamate 1-semialdehyde (GSA). The polypeptide is Glutamyl-tRNA reductase (Christiangramia forsetii (strain DSM 17595 / CGMCC 1.15422 / KT0803) (Gramella forsetii)).